We begin with the raw amino-acid sequence, 344 residues long: tRNA N6-adenosine threonylcarbamoyltransferase (344 aa).

Positions 111 and 115 each coordinate Fe cation. Substrate-binding positions include 134-138, Asp167, Gly180, Asp184, and Asn277; that span reads LVSGG. Fe cation is bound at residue Asp305.

It belongs to the KAE1 / TsaD family. Fe(2+) is required as a cofactor.

The protein resides in the cytoplasm. The catalysed reaction is L-threonylcarbamoyladenylate + adenosine(37) in tRNA = N(6)-L-threonylcarbamoyladenosine(37) in tRNA + AMP + H(+). Its function is as follows. Required for the formation of a threonylcarbamoyl group on adenosine at position 37 (t(6)A37) in tRNAs that read codons beginning with adenine. Is involved in the transfer of the threonylcarbamoyl moiety of threonylcarbamoyl-AMP (TC-AMP) to the N6 group of A37, together with TsaE and TsaB. TsaD likely plays a direct catalytic role in this reaction. This is tRNA N6-adenosine threonylcarbamoyltransferase from Microcystis aeruginosa (strain NIES-843 / IAM M-2473).